Reading from the N-terminus, the 213-residue chain is Nucleoside triphosphate pyrophosphatase (213 aa).

Asp79 acts as the Proton acceptor in catalysis.

Belongs to the Maf family. A divalent metal cation serves as cofactor.

It localises to the cytoplasm. The enzyme catalyses a ribonucleoside 5'-triphosphate + H2O = a ribonucleoside 5'-phosphate + diphosphate + H(+). It catalyses the reaction a 2'-deoxyribonucleoside 5'-triphosphate + H2O = a 2'-deoxyribonucleoside 5'-phosphate + diphosphate + H(+). In terms of biological role, nucleoside triphosphate pyrophosphatase. May have a dual role in cell division arrest and in preventing the incorporation of modified nucleotides into cellular nucleic acids. This is Nucleoside triphosphate pyrophosphatase from Mycobacterium leprae (strain Br4923).